The chain runs to 234 residues: Cytidylate kinase (234 aa).

10–18 serves as a coordination point for ATP; sequence GYSACGKST.

The protein belongs to the cytidylate kinase family. Type 1 subfamily.

The protein localises to the cytoplasm. The catalysed reaction is CMP + ATP = CDP + ADP. It catalyses the reaction dCMP + ATP = dCDP + ADP. The polypeptide is Cytidylate kinase (Cytophaga hutchinsonii (strain ATCC 33406 / DSM 1761 / CIP 103989 / NBRC 15051 / NCIMB 9469 / D465)).